Reading from the N-terminus, the 350-residue chain is Holliday junction branch migration complex subunit RuvB (350 aa).

The large ATPase domain (RuvB-L) stretch occupies residues 1–182; that stretch reads MEDRIVTPLN…FGVLCPMDFY (182 aa). Residues Leu21, Arg22, Gly63, Lys66, Thr67, Thr68, 129–131, Arg172, Tyr182, and Arg219 each bind ATP; that span reads EDY. Thr67 serves as a coordination point for Mg(2+). The segment at 183 to 253 is small ATPAse domain (RuvB-S); sequence DQEELSEIVV…TSKAALELLE (71 aa). Residues 256-350 are head domain (RuvB-H); that stretch reads KEGFDSIDNK…KQSSLFDGEV (95 aa). 2 residues coordinate DNA: Arg311 and Arg316.

This sequence belongs to the RuvB family. As to quaternary structure, homohexamer. Forms an RuvA(8)-RuvB(12)-Holliday junction (HJ) complex. HJ DNA is sandwiched between 2 RuvA tetramers; dsDNA enters through RuvA and exits via RuvB. An RuvB hexamer assembles on each DNA strand where it exits the tetramer. Each RuvB hexamer is contacted by two RuvA subunits (via domain III) on 2 adjacent RuvB subunits; this complex drives branch migration. In the full resolvosome a probable DNA-RuvA(4)-RuvB(12)-RuvC(2) complex forms which resolves the HJ.

It is found in the cytoplasm. It catalyses the reaction ATP + H2O = ADP + phosphate + H(+). In terms of biological role, the RuvA-RuvB-RuvC complex processes Holliday junction (HJ) DNA during genetic recombination and DNA repair, while the RuvA-RuvB complex plays an important role in the rescue of blocked DNA replication forks via replication fork reversal (RFR). RuvA specifically binds to HJ cruciform DNA, conferring on it an open structure. The RuvB hexamer acts as an ATP-dependent pump, pulling dsDNA into and through the RuvAB complex. RuvB forms 2 homohexamers on either side of HJ DNA bound by 1 or 2 RuvA tetramers; 4 subunits per hexamer contact DNA at a time. Coordinated motions by a converter formed by DNA-disengaged RuvB subunits stimulates ATP hydrolysis and nucleotide exchange. Immobilization of the converter enables RuvB to convert the ATP-contained energy into a lever motion, pulling 2 nucleotides of DNA out of the RuvA tetramer per ATP hydrolyzed, thus driving DNA branch migration. The RuvB motors rotate together with the DNA substrate, which together with the progressing nucleotide cycle form the mechanistic basis for DNA recombination by continuous HJ branch migration. Branch migration allows RuvC to scan DNA until it finds its consensus sequence, where it cleaves and resolves cruciform DNA. The polypeptide is Holliday junction branch migration complex subunit RuvB (Clostridium kluyveri (strain NBRC 12016)).